An 884-amino-acid chain; its full sequence is Protein P (884 aa).

The terminal protein domain (TP) stretch occupies residues 1 to 184 (MHPFSRLFRN…GKPYSWEHRQ (184 aa)). The interval 185-387 (LVQHNGQQHK…YCIHHIVSSL (203 aa)) is spacer. The interval 299–345 (RNSGHTTWFSSASNSNKSRSREKAYSSNSTSKRYSPPLNYEKSDFSS) is disordered. A polymerase/reverse transcriptase domain (RT) region spans residues 388–729 (DDWGPCTVTG…YEELWPVVRQ (342 aa)). In terms of domain architecture, Reverse transcriptase spans 398 to 639 (DVTIKSPRTP…NHLHFMGYVI (242 aa)). 3 residues coordinate Mg(2+): Asp470, Asp590, and Asp591.

Belongs to the hepadnaviridae P protein family.

The catalysed reaction is DNA(n) + a 2'-deoxyribonucleoside 5'-triphosphate = DNA(n+1) + diphosphate. It carries out the reaction Endonucleolytic cleavage to 5'-phosphomonoester.. With respect to regulation, activated by host HSP70 and HSP40 in vitro to be able to bind the epsilon loop of the pgRNA. Because deletion of the RNase H region renders the protein partly chaperone-independent, the chaperones may be needed indirectly to relieve occlusion of the RNA-binding site by this domain. Inhibited by several reverse-transcriptase inhibitors: Lamivudine, Adefovir and Entecavir. Functionally, multifunctional enzyme that converts the viral RNA genome into dsDNA in viral cytoplasmic capsids. This enzyme displays a DNA polymerase activity that can copy either DNA or RNA templates, and a ribonuclease H (RNase H) activity that cleaves the RNA strand of RNA-DNA heteroduplexes in a partially processive 3'- to 5'-endonucleasic mode. Neo-synthesized pregenomic RNA (pgRNA) are encapsidated together with the P protein, and reverse-transcribed inside the nucleocapsid. Initiation of reverse-transcription occurs first by binding the epsilon loop on the pgRNA genome, and is initiated by protein priming, thereby the 5'-end of (-)DNA is covalently linked to P protein. Partial (+)DNA is synthesized from the (-)DNA template and generates the relaxed circular DNA (RC-DNA) genome. After budding and infection, the RC-DNA migrates in the nucleus, and is converted into a plasmid-like covalently closed circular DNA (cccDNA). The activity of P protein does not seem to be necessary for cccDNA generation, and is presumably released from (+)DNA by host nuclear DNA repair machinery. The protein is Protein P of Woodchuck hepatitis B virus (isolate 7) (WHV).